Consider the following 104-residue polypeptide: Growth-regulated protein homolog alpha (104 aa).

Positions 1 to 30 (MAPAATAAAPRLLRAAMLFLLLVAAGRRAA) are cleaved as a signal peptide. Intrachain disulfides connect Cys-40–Cys-66 and Cys-42–Cys-82.

The protein belongs to the intercrine alpha (chemokine CxC) family.

It localises to the secreted. This is Growth-regulated protein homolog alpha from Bos taurus (Bovine).